We begin with the raw amino-acid sequence, 149 residues long: 3-dehydroquinate dehydratase (149 aa).

Tyr26 functions as the Proton acceptor in the catalytic mechanism. Substrate contacts are provided by Asn77, His83, and Asp90. The Proton donor role is filled by His103. Substrate-binding positions include 104–105 (LS) and Arg114.

It belongs to the type-II 3-dehydroquinase family. In terms of assembly, homododecamer.

It carries out the reaction 3-dehydroquinate = 3-dehydroshikimate + H2O. It functions in the pathway metabolic intermediate biosynthesis; chorismate biosynthesis; chorismate from D-erythrose 4-phosphate and phosphoenolpyruvate: step 3/7. Its function is as follows. Catalyzes a trans-dehydration via an enolate intermediate. The sequence is that of 3-dehydroquinate dehydratase from Aliivibrio fischeri (strain MJ11) (Vibrio fischeri).